We begin with the raw amino-acid sequence, 498 residues long: NADP-dependent glyceraldehyde-3-phosphate dehydrogenase (498 aa).

Substrate is bound by residues R118 and 171–172; that span reads NY. Residues K194, T197, and D232 each coordinate NADP(+). Residue 247 to 251 coordinates NAD(+); that stretch reads GGDTG. E266 (proton acceptor) is an active-site residue. 299 to 301 is a binding site for substrate; sequence RCT. C300 serves as the catalytic Nucleophile. E393 provides a ligand contact to NADP(+). R453 lines the substrate pocket.

The protein belongs to the aldehyde dehydrogenase family.

It is found in the cytoplasm. It carries out the reaction D-glyceraldehyde 3-phosphate + NADP(+) + H2O = (2R)-3-phosphoglycerate + NADPH + 2 H(+). Functionally, important as a means of generating NADPH for biosynthetic reactions. The chain is NADP-dependent glyceraldehyde-3-phosphate dehydrogenase (GPN1) from Zea mays (Maize).